The primary structure comprises 318 residues: Phosphate acetyltransferase (318 aa).

Belongs to the phosphate acetyltransferase and butyryltransferase family.

It localises to the cytoplasm. The catalysed reaction is acetyl-CoA + phosphate = acetyl phosphate + CoA. Its pathway is metabolic intermediate biosynthesis; acetyl-CoA biosynthesis; acetyl-CoA from acetate: step 2/2. The protein is Phosphate acetyltransferase (pta) of Paracoccus denitrificans.